A 513-amino-acid polypeptide reads, in one-letter code: Solute carrier family 2, facilitated glucose transporter member 10 (513 aa).

At 1–6 the chain is on the cytoplasmic side; that stretch reads MGCSVL. Residues 7 to 27 form a helical membrane-spanning segment; that stretch reads LLTITVSTLGGLVFGYELGII. Residues 28–46 are Extracellular-facing; sequence SGALPQLQTHFSLGCVQQE. A helical membrane pass occupies residues 47–67; the sequence is AVVSALLIGSLFASIIGGWLI. Residues 68-80 are Cytoplasmic-facing; the sequence is DRHGRRTSILLSN. The chain crosses the membrane as a helical span at residues 81-101; that stretch reads LLILAGSVILTTGTSFFALVI. Residues 102–104 lie on the Extracellular side of the membrane; the sequence is GRA. The helical transmembrane segment at 105–125 threads the bilayer; sequence VIGFAMTVSSMSCCIFVSEMV. Over 126–130 the chain is Cytoplasmic; that stretch reads TPERR. The helical transmembrane segment at 131–151 threads the bilayer; sequence GLMVTLYEVGITVGILIAYAV. At 152–164 the chain is on the extracellular side; sequence NYIFNNVPLTGWR. A helical membrane pass occupies residues 165–185; the sequence is YMFGFAIIPSLIQLASIVLLP. At 186–236 the chain is on the cytoplasmic side; it reads KQAEVFVIHDDDSRQADRLTEETETSNQHQQSEKYGVSDLFKSKDNMRRRT. A helical transmembrane segment spans residues 237–257; that stretch reads VIGVGLVLSQQFTGQPNVLFY. 246–247 serves as a coordination point for D-glucose; that stretch reads QQ. Over 258-272 the chain is Extracellular; it reads ASTILFSVGFQSNAS. N-linked (GlcNAc...) asparagine glycosylation occurs at N270. The chain crosses the membrane as a helical span at residues 273 to 293; it reads AILASVGFGIVKVIATLLAML. At 294 to 301 the chain is on the cytoplasmic side; that stretch reads CSDRAGRR. Residues 302–322 form a helical membrane-spanning segment; it reads SLLIGGCSMLAVGLILTGFLC. At 323–376 the chain is on the extracellular side; it reads RQSVIDTTKRCTSVGPHSNLTLSAEHDEGVGFSSQTLDVHEHLRSFSQSEDIYK. N-linked (GlcNAc...) asparagine glycosylation occurs at N341. The chain crosses the membrane as a helical span at residues 377–397; the sequence is WIIFTCLMAVVSAFSVSFGPM. At 398–422 the chain is on the cytoplasmic side; sequence TWVVLSEIFPKDIRGRAFSFINCFN. W399 is a binding site for D-glucose. Helical transmembrane passes span 423–443 and 444–464; these read VGANLIVSFSFLSIIDVIGLS and GVFLMYGVVGIAGVVFIYLVL. Topologically, residues 465-513 are cytoplasmic; that stretch reads PETKGKSLQDIDRELSQTRMIHRQELCSIFQRRRFSPGYQRVQLTSTAT.

This sequence belongs to the major facilitator superfamily. Sugar transporter (TC 2.A.1.1) family. Glucose transporter subfamily.

The protein localises to the endomembrane system. The protein resides in the cytoplasm. Its subcellular location is the perinuclear region. The catalysed reaction is D-glucose(out) = D-glucose(in). Its function is as follows. Facilitative glucose transporter required for the development of the cardiovascular system. This Danio rerio (Zebrafish) protein is Solute carrier family 2, facilitated glucose transporter member 10.